Consider the following 218-residue polypeptide: Adapter protein MecA (218 aa).

This sequence belongs to the MecA family. Homodimer.

In terms of biological role, enables the recognition and targeting of unfolded and aggregated proteins to the ClpC protease or to other proteins involved in proteolysis. This is Adapter protein MecA from Exiguobacterium sp. (strain ATCC BAA-1283 / AT1b).